The chain runs to 153 residues: Transcriptional repressor NrdR (153 aa).

The segment at 3–33 (CPYCNYKESKVIDSRHTDLKSIRRRRECESC) is a zinc-finger region. Residues 48-138 (LMVIKKDNSR…VYRQFKDINT (91 aa)) form the ATP-cone domain.

It belongs to the NrdR family. Zn(2+) is required as a cofactor.

Negatively regulates transcription of bacterial ribonucleotide reductase nrd genes and operons by binding to NrdR-boxes. The protein is Transcriptional repressor NrdR of Clostridioides difficile (strain 630) (Peptoclostridium difficile).